We begin with the raw amino-acid sequence, 424 residues long: Deoxyguanosinetriphosphate triphosphohydrolase-like protein (424 aa).

A disordered region spans residues 1–24; the sequence is MYPYSDADAFRRHPERAKSSQLRT. Over residues 8-18 the composition is skewed to basic and acidic residues; it reads DAFRRHPERAK. An HD domain is found at 67 to 217; that stretch reads RLTHSLEVAQ…MDFSDDIAYS (151 aa).

Belongs to the dGTPase family. Type 2 subfamily.

In Corynebacterium glutamicum (strain R), this protein is Deoxyguanosinetriphosphate triphosphohydrolase-like protein.